A 360-amino-acid polypeptide reads, in one-letter code: Photosystem II protein D1 2 (360 aa).

3 consecutive transmembrane segments (helical) span residues 29–46, 118–133, and 142–156; these read YIGW…SATI, HFLI…EWEF, and WICV…AATA. His118 is a binding site for chlorophyll a. Tyr126 is a pheophytin a binding site. Residues Asp170 and Glu189 each contribute to the [CaMn4O5] cluster site. Residues 197–218 form a helical membrane-spanning segment; it reads LHMFGVAGVFGGSLFAAMHGSL. His198 contacts chlorophyll a. A quinone is bound by residues His215 and 264-265; that span reads SF. A Fe cation-binding site is contributed by His215. His272 serves as a coordination point for Fe cation. A helical membrane pass occupies residues 274–288; that stretch reads FLAAWPVIGIWLTSL. Positions 332, 333, 342, and 344 each coordinate [CaMn4O5] cluster. Positions 345-360 are excised as a propeptide; that stretch reads GTESAPVAFAAALGDG.

The protein belongs to the reaction center PufL/M/PsbA/D family. As to quaternary structure, PSII is composed of 1 copy each of membrane proteins PsbA, PsbB, PsbC, PsbD, PsbE, PsbF, PsbH, PsbI, PsbJ, PsbK, PsbL, PsbM, PsbT, PsbX, Psb30/Ycf12, peripheral proteins PsbO, CyanoQ (PsbQ), PsbU, PsbV and a large number of cofactors. It forms dimeric complexes. Requires The D1/D2 heterodimer binds P680, chlorophylls that are the primary electron donor of PSII, and subsequent electron acceptors. It shares a non-heme iron and each subunit binds pheophytin, quinone, additional chlorophylls, carotenoids and lipids. D1 provides most of the ligands for the Mn4-Ca-O5 cluster of the oxygen-evolving complex (OEC). There is also a Cl(-1) ion associated with D1 and D2, which is required for oxygen evolution. The PSII complex binds additional chlorophylls, carotenoids and specific lipids. as cofactor. Tyr-161 forms a radical intermediate that is referred to as redox-active TyrZ, YZ or Y-Z. Post-translationally, C-terminally processed by CtpA; processing is essential to allow assembly of the oxygen-evolving complex and thus photosynthetic growth.

The protein localises to the cell inner membrane. The enzyme catalyses 2 a plastoquinone + 4 hnu + 2 H2O = 2 a plastoquinol + O2. Its function is as follows. Photosystem II (PSII) is a light-driven water:plastoquinone oxidoreductase that uses light energy to abstract electrons from H(2)O, generating O(2) and a proton gradient subsequently used for ATP formation. It consists of a core antenna complex that captures photons, and an electron transfer chain that converts photonic excitation into a charge separation. The D1/D2 (PsbA/PsbD) reaction center heterodimer binds P680, the primary electron donor of PSII as well as several subsequent electron acceptors. The sequence is that of Photosystem II protein D1 2 from Gloeobacter violaceus (strain ATCC 29082 / PCC 7421).